A 103-amino-acid polypeptide reads, in one-letter code: Truncated secreted TNF-receptor-like protein A53R (103 aa).

Residues 36–73 (SCDKGEYLDKRHNQCCNRCPPGEFAKVRCNGNDNTKCE) form a TNFR-Cys 1 repeat. Intrachain disulfides connect Cys-37/Cys-50, Cys-51/Cys-64, and Cys-54/Cys-72. One copy of the TNFR-Cys 2; truncated repeat lies at 74–103 (RCPPHTYTTIPIILMDVINVENAQPDHLIR).

It belongs to the poxviridae A53R protein family.

The chain is Truncated secreted TNF-receptor-like protein A53R from Vaccinia virus (strain Western Reserve) (VACV).